Consider the following 443-residue polypeptide: Tol-Pal system protein TolB (443 aa).

Positions 1–24 are cleaved as a signal peptide; that stretch reads MSFQIRVFTAILAVLSLFTAPVLA. Positions 424–443 are disordered; that stretch reads LRPVRTPEGGSDPSWSPLQR.

This sequence belongs to the TolB family. The Tol-Pal system is composed of five core proteins: the inner membrane proteins TolA, TolQ and TolR, the periplasmic protein TolB and the outer membrane protein Pal. They form a network linking the inner and outer membranes and the peptidoglycan layer.

The protein localises to the periplasm. Functionally, part of the Tol-Pal system, which plays a role in outer membrane invagination during cell division and is important for maintaining outer membrane integrity. The sequence is that of Tol-Pal system protein TolB from Roseobacter denitrificans (strain ATCC 33942 / OCh 114) (Erythrobacter sp. (strain OCh 114)).